The sequence spans 266 residues: Segregation and condensation protein A (266 aa).

This sequence belongs to the ScpA family. In terms of assembly, component of a cohesin-like complex composed of ScpA, ScpB and the Smc homodimer, in which ScpA and ScpB bind to the head domain of Smc. The presence of the three proteins is required for the association of the complex with DNA.

It localises to the cytoplasm. Its function is as follows. Participates in chromosomal partition during cell division. May act via the formation of a condensin-like complex containing Smc and ScpB that pull DNA away from mid-cell into both cell halves. This chain is Segregation and condensation protein A, found in Coxiella burnetii (strain RSA 493 / Nine Mile phase I).